The following is a 460-amino-acid chain: Mercuric reductase (460 aa).

The region spanning Met-1 to Met-65 is the HMA domain. Residues Cys-11 and Cys-14 each coordinate a metal cation. Residues Ala-110, Gly-130, and Thr-135 each contribute to the FAD site. An intrachain disulfide couples Cys-136 to Cys-141. Residues Lys-145 and Ala-211 each coordinate FAD. Hg(2+) is bound by residues Cys-457 and Cys-458.

It belongs to the class-I pyridine nucleotide-disulfide oxidoreductase family. As to quaternary structure, homodimer. The cofactor is FAD.

The enzyme catalyses Hg + NADP(+) + H(+) = Hg(2+) + NADPH. In terms of biological role, resistance to Hg(2+) in bacteria appears to be governed by a specialized system which includes mercuric reductase. MerA protein is responsible for volatilizing mercury as Hg(0). This is Mercuric reductase (merA) from Serratia marcescens.